Here is a 92-residue protein sequence, read N- to C-terminus: Small ribosomal subunit protein uS19c (92 aa).

Belongs to the universal ribosomal protein uS19 family.

The protein localises to the plastid. It localises to the chloroplast. In terms of biological role, protein S19 forms a complex with S13 that binds strongly to the 16S ribosomal RNA. This chain is Small ribosomal subunit protein uS19c, found in Chlorokybus atmophyticus (Soil alga).